Consider the following 515-residue polypeptide: Mucin-like protein Glc1.8a (515 aa).

Residues 1–20 (MSQITLIILILAIGFSCTKS) form the signal peptide. Over 21 to 467 (HPINSTRDGE…ANDIKKPAFP (447 aa)) the chain is Extracellular. N-linked (GlcNAc...) asparagine; by host glycans are attached at residues asparagine 24, asparagine 45, asparagine 51, asparagine 60, asparagine 85, asparagine 93, asparagine 102, asparagine 123, asparagine 129, asparagine 138, asparagine 180, asparagine 201, asparagine 207, asparagine 216, asparagine 258, asparagine 279, asparagine 285, asparagine 319, asparagine 327, asparagine 336, asparagine 357, asparagine 363, asparagine 372, asparagine 397, asparagine 405, asparagine 413, asparagine 434, and asparagine 441. The tract at residues 80-114 (SKKDENITGQSEINTSAKSQPINSTRDGEDSGTDL) is disordered. The segment covering 86–104 (ITGQSEINTSAKSQPINST) has biased composition (polar residues). Positions 314–358 (SKKDENVTGQSEINTSAKSQPINSTRDGEDSGTDLKNLLTDPANT) are disordered. Residues 320–338 (VTGQSEINTSAKSQPINST) are compositionally biased toward polar residues. The tract at residues 393–413 (RKDENVTGQSEFNISTNSNLN) is disordered. The helical transmembrane segment at 468-488 (YCIILITFQIVTVGMIIYLVF) threads the bilayer. The Cytoplasmic segment spans residues 489 to 515 (RTMRKPCQSERAIPLNTFGFGNNSSHE).

Belongs to the polydnaviridae Glc1.8 protein family.

The protein localises to the host membrane. Involved in suppression of the insect cellular immune response. Inhibits host hemocyte adhesion and phagocytosis. This chain is Mucin-like protein Glc1.8a (O9), found in Microplitis demolitor (Parasitoid wasp).